Here is a 3094-residue protein sequence, read N- to C-terminus: Replicase polyprotein 1ab (3094 aa).

Residues Cys-509 and His-569 each act as for leader protease activity in the active site. Residues 622–647 (ARSVEKDLIDFKDEIKSLSKEKRSVT) adopt a coiled-coil conformation. The Alphavirus-like MT domain maps to 670–857 (SFTHSVYSDH…HKLSNIKSIM (188 aa)). Positions 1807–1816 (DSESVSSDEV) are enriched in low complexity. Residues 1807 to 1828 (DSESVSSDEVASNPRPGLHGGS) form a disordered region. The (+)RNA virus helicase ATP-binding domain maps to 2215-2387 (TQTNFVSANA…FVDDESRVYG (173 aa)). In terms of domain architecture, (+)RNA virus helicase C-terminal spans 2388-2548 (EVSYRCPWDV…AYRVYPTSFG (161 aa)). Residues 2817–2930 (YNVGEIDFSK…FSESPIRNSA (114 aa)) enclose the RdRp catalytic domain.

In terms of processing, the leader protease is released by autoproteolysis.

Its subcellular location is the host cytoplasmic vesicle membrane. The catalysed reaction is RNA(n) + a ribonucleoside 5'-triphosphate = RNA(n+1) + diphosphate. The enzyme catalyses ATP + H2O = ADP + phosphate + H(+). In terms of biological role, L-pro is involved in systemic transport and in RNA amplification. RNA-dependent RNA polymerase replicates the viral genome. This is Replicase polyprotein 1ab from Beet yellows virus (isolate Ukraine) (BYV).